A 388-amino-acid chain; its full sequence is Succinate--CoA ligase [ADP-forming] subunit beta (388 aa).

One can recognise an ATP-grasp domain in the interval 9–244; that stretch reads KQLFARSGLP…QSQEDPREAQ (236 aa). ATP contacts are provided by residues Lys-46, 53-55, Glu-99, Thr-102, and Glu-107; that span reads GRG. 2 residues coordinate Mg(2+): Asn-199 and Asp-213. Residues Asn-264 and 321–323 contribute to the substrate site; that span reads GIV.

It belongs to the succinate/malate CoA ligase beta subunit family. Heterotetramer of two alpha and two beta subunits. It depends on Mg(2+) as a cofactor.

The catalysed reaction is succinate + ATP + CoA = succinyl-CoA + ADP + phosphate. The enzyme catalyses GTP + succinate + CoA = succinyl-CoA + GDP + phosphate. It functions in the pathway carbohydrate metabolism; tricarboxylic acid cycle; succinate from succinyl-CoA (ligase route): step 1/1. Functionally, succinyl-CoA synthetase functions in the citric acid cycle (TCA), coupling the hydrolysis of succinyl-CoA to the synthesis of either ATP or GTP and thus represents the only step of substrate-level phosphorylation in the TCA. The beta subunit provides nucleotide specificity of the enzyme and binds the substrate succinate, while the binding sites for coenzyme A and phosphate are found in the alpha subunit. The sequence is that of Succinate--CoA ligase [ADP-forming] subunit beta from Cronobacter sakazakii (strain ATCC BAA-894) (Enterobacter sakazakii).